The sequence spans 697 residues: Polyribonucleotide nucleotidyltransferase (697 aa).

Positions 486 and 492 each coordinate Mg(2+). One can recognise a KH domain in the interval 553–612 (PRIHTIKIHPDKIKDVIGKCGSVIRALTEETKTIIDIEDDGTVTVAATDSIKAQQAICRI). The 69-residue stretch at 622 to 690 (GSIYHGKVTR…RQGRIRLSMK (69 aa)) folds into the S1 motif domain.

The protein belongs to the polyribonucleotide nucleotidyltransferase family. Component of the RNA degradosome, which is a multiprotein complex involved in RNA processing and mRNA degradation. Mg(2+) serves as cofactor.

It localises to the cytoplasm. It catalyses the reaction RNA(n+1) + phosphate = RNA(n) + a ribonucleoside 5'-diphosphate. Functionally, involved in mRNA degradation. Catalyzes the phosphorolysis of single-stranded polyribonucleotides processively in the 3'- to 5'-direction. This Baumannia cicadellinicola subsp. Homalodisca coagulata protein is Polyribonucleotide nucleotidyltransferase.